Reading from the N-terminus, the 150-residue chain is 3-dehydroquinate dehydratase (150 aa).

Residue Y26 is the Proton acceptor of the active site. Substrate-binding residues include N77, H83, and D90. Residue H103 is the Proton donor of the active site. Substrate-binding positions include L104–S105 and R114.

This sequence belongs to the type-II 3-dehydroquinase family. Homododecamer.

The catalysed reaction is 3-dehydroquinate = 3-dehydroshikimate + H2O. It functions in the pathway metabolic intermediate biosynthesis; chorismate biosynthesis; chorismate from D-erythrose 4-phosphate and phosphoenolpyruvate: step 3/7. Functionally, catalyzes a trans-dehydration via an enolate intermediate. This is 3-dehydroquinate dehydratase from Photorhabdus laumondii subsp. laumondii (strain DSM 15139 / CIP 105565 / TT01) (Photorhabdus luminescens subsp. laumondii).